The primary structure comprises 307 residues: Homoserine kinase (307 aa).

ATP is bound at residue 92–102; it reads PLARGLGSSAT.

Belongs to the GHMP kinase family. Homoserine kinase subfamily.

The protein localises to the cytoplasm. It carries out the reaction L-homoserine + ATP = O-phospho-L-homoserine + ADP + H(+). It participates in amino-acid biosynthesis; L-threonine biosynthesis; L-threonine from L-aspartate: step 4/5. Catalyzes the ATP-dependent phosphorylation of L-homoserine to L-homoserine phosphate. In Microchaete diplosiphon (Fremyella diplosiphon), this protein is Homoserine kinase (thrB).